We begin with the raw amino-acid sequence, 268 residues long: Probable membrane transporter protein HI_0806 (268 aa).

Transmembrane regions (helical) follow at residues 6-26 (IFIL…FGIG), 46-66 (VISA…LLFF), 79-99 (ILWS…SFYF), 101-121 (TAII…KTFL), 147-167 (GGGL…APLV), 178-198 (IAVY…YGYL), 212-232 (LGLN…MSFF), and 248-268 (LLAI…FVFH).

This sequence belongs to the 4-toluene sulfonate uptake permease (TSUP) (TC 2.A.102) family.

Its subcellular location is the cell membrane. In Haemophilus influenzae (strain ATCC 51907 / DSM 11121 / KW20 / Rd), this protein is Probable membrane transporter protein HI_0806.